The following is a 207-amino-acid chain: Alpha/beta-tubulin-N-acetyltransferase 9 (207 aa).

The N-acetyltransferase domain maps to 35 to 180 (EELQRLTASE…QEVTLRLTVS (146 aa)).

Belongs to the acetyltransferase family. GNAT subfamily.

It catalyses the reaction N-terminal L-methionyl-[tubulin] + acetyl-CoA = N-terminal N(alpha)-acetyl-L-methionyl-[tubulin] + CoA + H(+). In terms of biological role, N-acetyltransferase that mediates the acetylation of the N-terminal residues of alpha- and beta-tubulin. The polypeptide is Alpha/beta-tubulin-N-acetyltransferase 9 (NAT9) (Homo sapiens (Human)).